A 169-amino-acid chain; its full sequence is Inorganic pyrophosphatase (169 aa).

Positions 20, 34, and 46 each coordinate substrate. 3 residues coordinate Mg(2+): Asp56, Asp61, and Asp93. Tyr130 provides a ligand contact to substrate.

This sequence belongs to the PPase family. As to quaternary structure, homohexamer. The cofactor is Mg(2+).

It is found in the cytoplasm. It catalyses the reaction diphosphate + H2O = 2 phosphate + H(+). Its function is as follows. Catalyzes the hydrolysis of inorganic pyrophosphate (PPi) forming two phosphate ions. In Methanosarcina mazei (strain ATCC BAA-159 / DSM 3647 / Goe1 / Go1 / JCM 11833 / OCM 88) (Methanosarcina frisia), this protein is Inorganic pyrophosphatase.